The primary structure comprises 319 residues: Acetyl-coenzyme A carboxylase carboxyl transferase subunit alpha (319 aa).

Residues 43–296 (LRDKSIELTR…KKQLLFDLSE (254 aa)) form the CoA carboxyltransferase C-terminal domain.

It belongs to the AccA family. Acetyl-CoA carboxylase is a heterohexamer composed of biotin carboxyl carrier protein (AccB), biotin carboxylase (AccC) and two subunits each of ACCase subunit alpha (AccA) and ACCase subunit beta (AccD).

The protein localises to the cytoplasm. The catalysed reaction is N(6)-carboxybiotinyl-L-lysyl-[protein] + acetyl-CoA = N(6)-biotinyl-L-lysyl-[protein] + malonyl-CoA. The protein operates within lipid metabolism; malonyl-CoA biosynthesis; malonyl-CoA from acetyl-CoA: step 1/1. In terms of biological role, component of the acetyl coenzyme A carboxylase (ACC) complex. First, biotin carboxylase catalyzes the carboxylation of biotin on its carrier protein (BCCP) and then the CO(2) group is transferred by the carboxyltransferase to acetyl-CoA to form malonyl-CoA. This chain is Acetyl-coenzyme A carboxylase carboxyl transferase subunit alpha, found in Baumannia cicadellinicola subsp. Homalodisca coagulata.